The chain runs to 361 residues: S-adenosylmethionine:tRNA ribosyltransferase-isomerase (361 aa).

The protein belongs to the QueA family. In terms of assembly, monomer.

Its subcellular location is the cytoplasm. It catalyses the reaction 7-aminomethyl-7-carbaguanosine(34) in tRNA + S-adenosyl-L-methionine = epoxyqueuosine(34) in tRNA + adenine + L-methionine + 2 H(+). It participates in tRNA modification; tRNA-queuosine biosynthesis. Functionally, transfers and isomerizes the ribose moiety from AdoMet to the 7-aminomethyl group of 7-deazaguanine (preQ1-tRNA) to give epoxyqueuosine (oQ-tRNA). This Haemophilus ducreyi (strain 35000HP / ATCC 700724) protein is S-adenosylmethionine:tRNA ribosyltransferase-isomerase.